The following is a 141-amino-acid chain: Hemoglobin subunit alpha (141 aa).

In terms of domain architecture, Globin spans 1 to 141 (VLSPADKTNV…VSTVLTSKYR (141 aa)). Serine 3 is modified (phosphoserine). Lysine 7 carries the post-translational modification N6-succinyllysine. The residue at position 8 (threonine 8) is a Phosphothreonine. Lysine 11 is modified (N6-succinyllysine). At lysine 16 the chain carries N6-acetyllysine; alternate. Lysine 16 is modified (N6-succinyllysine; alternate). The residue at position 24 (tyrosine 24) is a Phosphotyrosine. Serine 35 bears the Phosphoserine mark. Lysine 40 bears the N6-succinyllysine mark. Serine 49 bears the Phosphoserine mark. Histidine 58 contributes to the O2 binding site. Histidine 87 is a binding site for heme b. Phosphoserine is present on serine 102. Threonine 108 is subject to Phosphothreonine. A phosphoserine mark is found at serine 124 and serine 131. 2 positions are modified to phosphothreonine: threonine 134 and threonine 137. At serine 138 the chain carries Phosphoserine.

Belongs to the globin family. As to quaternary structure, heterotetramer of two alpha chains and two beta chains. In terms of tissue distribution, red blood cells.

Functionally, involved in oxygen transport from the lung to the various peripheral tissues. This chain is Hemoglobin subunit alpha, found in Otospermophilus beecheyi (California ground squirrel).